Here is a 306-residue protein sequence, read N- to C-terminus: uncharacterized protein (306 aa).

N208 carries an N-linked (GlcNAc...) asparagine glycan. 2 helical membrane-spanning segments follow: residues 218-238 (VFEIILSCPNTCPFLLLVLFY) and 284-304 (VMLVGGIASIVAAVVVYKITK).

The protein localises to the membrane. This is an uncharacterized protein from Encephalitozoon cuniculi (strain GB-M1) (Microsporidian parasite).